The primary structure comprises 1131 residues: PolyA-specific ribonuclease subunit panl-2 (1131 aa).

The USP domain maps to 489 to 864 (VTMQSTHGMN…LPALLAYKKK (376 aa)). Positions 909 to 1074 (VGLDAEFIKI…VDARYALKLY (166 aa)) constitute an Exonuclease domain. Polar residues predominate over residues 1104–1115 (QTSSPLVVSTTR). Positions 1104-1131 (QTSSPLVVSTTRKTPEDTNPADAAPKSV) are disordered.

This Caenorhabditis elegans protein is PolyA-specific ribonuclease subunit panl-2.